Consider the following 345-residue polypeptide: Phosphoribosylformylglycinamidine cyclo-ligase (345 aa).

Belongs to the AIR synthase family.

The protein resides in the cytoplasm. The catalysed reaction is 2-formamido-N(1)-(5-O-phospho-beta-D-ribosyl)acetamidine + ATP = 5-amino-1-(5-phospho-beta-D-ribosyl)imidazole + ADP + phosphate + H(+). The protein operates within purine metabolism; IMP biosynthesis via de novo pathway; 5-amino-1-(5-phospho-D-ribosyl)imidazole from N(2)-formyl-N(1)-(5-phospho-D-ribosyl)glycinamide: step 2/2. The polypeptide is Phosphoribosylformylglycinamidine cyclo-ligase (Escherichia coli O127:H6 (strain E2348/69 / EPEC)).